The sequence spans 200 residues: Dephospho-CoA kinase (200 aa).

The DPCK domain maps to 4–200 (VIGLTGGIAS…VILKKWNIID (197 aa)). Position 12-17 (12-17 (ASGKST)) interacts with ATP.

This sequence belongs to the CoaE family.

The protein resides in the cytoplasm. The catalysed reaction is 3'-dephospho-CoA + ATP = ADP + CoA + H(+). It participates in cofactor biosynthesis; coenzyme A biosynthesis; CoA from (R)-pantothenate: step 5/5. Functionally, catalyzes the phosphorylation of the 3'-hydroxyl group of dephosphocoenzyme A to form coenzyme A. The chain is Dephospho-CoA kinase from Bacillus cereus (strain ATCC 14579 / DSM 31 / CCUG 7414 / JCM 2152 / NBRC 15305 / NCIMB 9373 / NCTC 2599 / NRRL B-3711).